The following is a 100-amino-acid chain: MQADIPTLTRADITDMLYHEVGLSRADSAKMIEQMLGHITDALKKGENVKISGFGSFILRDKNERVGRNPKTGIEVPIAPRRVLTFRASQLMRQRIIKGA.

The protein belongs to the bacterial histone-like protein family. As to quaternary structure, heterodimer of an alpha and a beta chain.

This protein is one of the two subunits of integration host factor, a specific DNA-binding protein that functions in genetic recombination as well as in transcriptional and translational control. The polypeptide is Integration host factor subunit alpha (ihfA) (Zymomonas mobilis subsp. mobilis (strain ATCC 31821 / ZM4 / CP4)).